The primary structure comprises 115 residues: MWDPLLNEFPDSVHGLRCMLAIKYLQLVEETYEPNTLGHDLIRDLISVIRARDYAEANRRYTNFNARLEGSSKTELRQPVYQPCCCPHCPRHQASIMDLQAHVSKAADVQNVQKP.

This sequence belongs to the geminiviridae protein AV2/V2 family. In terms of assembly, interacts with host SGS3.

Its subcellular location is the host cytoplasm. The protein resides in the host perinuclear region. Its function is as follows. Through its interaction with host SGS3, acts as a suppressor of RNA-mediated gene silencing, also known as post-transcriptional gene silencing (PTGS), a mechanism of plant viral defense that limits the accumulation of viral RNAs. The polypeptide is Protein V2 (Tomato yellow leaf curl Sardinia virus (TYLCSV)).